The chain runs to 624 residues: Sodium/potassium/calcium exchanger 3 (624 aa).

Residues 1–25 (RDLLLSQLCFLASVALLLWSLSSLR) form the signal peptide. Residues 26 to 88 (EQKELDLMDL…DIFSNEDRRQ (63 aa)) lie on the Extracellular side of the membrane. 2 N-linked (GlcNAc...) asparagine glycosylation sites follow: asparagine 52 and asparagine 67. Residues 89–109 (GAVVLHVLCAMYMFYALAIVC) traverse the membrane as a helical segment. The Cytoplasmic segment spans residues 110–133 (DDFFVPSLEKICERLHLSEDVAGA). Residues 130–170 (VAGATFMAAGSSAPELFTSVIGVFITKGDVGVGTIVGSAVF) form an Alpha-1 repeat. The chain crosses the membrane as a helical span at residues 134-154 (TFMAAGSSAPELFTSVIGVFI). The Extracellular portion of the chain corresponds to 155-163 (TKGDVGVGT). The helical transmembrane segment at 164-184 (IVGSAVFNILCIIGVCGLFAG) threads the bilayer. At 185 to 191 (QVVALSS) the chain is on the cytoplasmic side. The chain crosses the membrane as a helical span at residues 192–212 (WCLLRDSIYYTLSVVALIVFI). Residues 213-215 (YDE) lie on the Extracellular side of the membrane. The helical transmembrane segment at 216–236 (KVSWWESLVLVLMYLIYIIIM) threads the bilayer. Topologically, residues 237-465 (KYNACIHQCF…WFMVTFASST (229 aa)) are cytoplasmic. Serine 289 bears the Phosphoserine mark. Residues 386 to 414 (AEADNETENENEDENNENDEEEDEDDDEG) are compositionally biased toward acidic residues. The segment at 386 to 421 (AEADNETENENEDENNENDEEEDEDDDEGPYTPFDP) is disordered. Residues 466–486 (LWIAAFSYMMVWMVTIIGYTL) traverse the membrane as a helical segment. Residues 487–491 (GIPDV) are Extracellular-facing. A helical transmembrane segment spans residues 492–512 (IMGITFLAAGTSVPDCMASLI). The stretch at 499–530 (AAGTSVPDCMASLIVARQGMGDMAVSNSIGSN) is one Alpha-2 repeat. The Cytoplasmic segment spans residues 513–530 (VARQGMGDMAVSNSIGSN). A helical membrane pass occupies residues 531-551 (VFDILIGLGLPWALQTLAVDY). Residues 552–561 (GSYIRLNSRG) lie on the Extracellular side of the membrane. The helical transmembrane segment at 562–582 (LIYSVGLLLASVFVTVFGVHL) threads the bilayer. At 583–596 (NKWQLDKKLGCGCL) the chain is on the cytoplasmic side. Residues 597 to 617 (FLYGVFLCFSIMTEFNVFTFV) form a helical membrane-spanning segment. The Extracellular segment spans residues 618–624 (NLPMCGD).

The protein belongs to the Ca(2+):cation antiporter (CaCA) (TC 2.A.19) family. SLC24A subfamily. In terms of tissue distribution, abundant in the brain. Expressed at low levels in the aorta, uterus and intestine.

It localises to the cell membrane. The catalysed reaction is Ca(2+)(out) + K(+)(out) + 4 Na(+)(in) = Ca(2+)(in) + K(+)(in) + 4 Na(+)(out). Its function is as follows. Calcium, potassium:sodium antiporter that transports 1 Ca(2+) and 1 K(+) in exchange for 4 Na(+). The sequence is that of Sodium/potassium/calcium exchanger 3 (Slc24a3) from Rattus norvegicus (Rat).